The chain runs to 67 residues: Potassium channel toxin alpha-KTx 6.16 (67 aa).

An N-terminal signal peptide occupies residues 1–24 (MNLKLALVLLLTVINVGMLPGATS). Disulfide bonds link cysteine 34-cysteine 55, cysteine 40-cysteine 60, cysteine 44-cysteine 62, and cysteine 50-cysteine 65.

It belongs to the short scorpion toxin superfamily. Potassium channel inhibitor family. Alpha-KTx 06 subfamily. Expressed by the venom gland.

The protein localises to the secreted. Functionally, inhibits voltage-gated potassium channels. The polypeptide is Potassium channel toxin alpha-KTx 6.16 (Opisthacanthus cayaporum (South American scorpion)).